Consider the following 298-residue polypeptide: tRNA uridine(34) hydroxylase (298 aa).

In terms of domain architecture, Rhodanese spans 123-217; it reads QNPDVTLVDT…YLEEIPVAES (95 aa). C177 functions as the Cysteine persulfide intermediate in the catalytic mechanism.

It belongs to the TrhO family.

The enzyme catalyses uridine(34) in tRNA + AH2 + O2 = 5-hydroxyuridine(34) in tRNA + A + H2O. Functionally, catalyzes oxygen-dependent 5-hydroxyuridine (ho5U) modification at position 34 in tRNAs. The chain is tRNA uridine(34) hydroxylase from Picosynechococcus sp. (strain ATCC 27264 / PCC 7002 / PR-6) (Agmenellum quadruplicatum).